Reading from the N-terminus, the 421-residue chain is Autophagy-related protein 17 (421 aa).

Belongs to the ATG17 family. In terms of assembly, forms a complex with ATG13, ATG29 and CIS1/ATG31. The ATG17-ATG29-ATG31 complex interacts with the ATG1-ATG13 complex. Forms a complex with SNX4 and ATG20. Interacts with ATG11.

Its subcellular location is the cytoplasm. The protein localises to the preautophagosomal structure membrane. Autophagy-specific protein that functions with ATG13, ATG29, and CIS1/ATG31 in response to autophagy-inducing signals as a scaffold to recruit other ATG proteins to organize pre-autophagosomal structure (PAS) formation. Modulates the timing and magnitude of the autophagy response, such as the size of the sequestering vesicles, through interacting with and regulating ATG1 kinase activity. Plays particularly a role in pexophagy and nucleophagy. With ATG13, is required for ATG1 activation by autophosphorylation. Recruits ATG9 to the pre-autophagosomal structure. The chain is Autophagy-related protein 17 from Kluyveromyces marxianus (strain DMKU3-1042 / BCC 29191 / NBRC 104275) (Yeast).